Consider the following 1355-residue polypeptide: Probable aldehyde oxidase 2 (1355 aa).

A 2Fe-2S ferredoxin-type domain is found at 9–96; that stretch reads RPVVVTVNGE…HCAVTTSEGI (88 aa). Residues Cys48, Cys53, Cys56, and Cys78 each contribute to the [2Fe-2S] cluster site. An FAD-binding PCMH-type domain is found at 244 to 422; it reads VAVTGDGWFH…VSISIPDWGS (179 aa). The tract at residues 544–577 is disordered; sequence PENANVPNGSCTNGTANGSANSSPEKHSNVDSSD. Residues 548 to 566 show a composition bias toward polar residues; it reads NVPNGSCTNGTANGSANSS.

This sequence belongs to the xanthine dehydrogenase family. Aldehyde oxidases (AO) are homodimers and heterodimers of AO subunits. The cofactor is [2Fe-2S] cluster. It depends on FAD as a cofactor. Mo-molybdopterin is required as a cofactor.

It catalyses the reaction an aldehyde + O2 + H2O = a carboxylate + H2O2 + H(+). The polypeptide is Probable aldehyde oxidase 2 (Oryza sativa subsp. japonica (Rice)).